A 261-amino-acid polypeptide reads, in one-letter code: tRNA pseudouridine synthase A (261 aa).

D51 serves as the catalytic Nucleophile. Y109 lines the substrate pocket.

The protein belongs to the tRNA pseudouridine synthase TruA family. In terms of assembly, homodimer.

The catalysed reaction is uridine(38/39/40) in tRNA = pseudouridine(38/39/40) in tRNA. In terms of biological role, formation of pseudouridine at positions 38, 39 and 40 in the anticodon stem and loop of transfer RNAs. The sequence is that of tRNA pseudouridine synthase A from Tolumonas auensis (strain DSM 9187 / NBRC 110442 / TA 4).